We begin with the raw amino-acid sequence, 459 residues long: Vanillin aminotransferase (459 aa).

Pyridoxal 5'-phosphate is bound by residues 115-116 and Asp255; that span reads GS. Lys284 carries the post-translational modification N6-(pyridoxal phosphate)lysine. Position 320-321 (320-321) interacts with pyridoxal 5'-phosphate; sequence FT. The stretch at 428 to 459 forms a coiled coil; it reads LSLEELDELIRIYGKALKDTEKRVEELKSQKK.

This sequence belongs to the class-III pyridoxal-phosphate-dependent aminotransferase family. As to expression, expressed in placental tissue of immature fruit.

The catalysed reaction is vanillin + L-alanine = vanillylamine + pyruvate. It participates in aromatic compound metabolism; phenylpropanoid biosynthesis. Functionally, involved in the biosynthesis of capsaicinoids natural products, pungent alkaloids synthesized from phenylpropanoid intermediates in the placental tissue of chili pepper fruit acting as repellant on herbivorous mammals and conferring spiciness to hot peppers. Can transfer an amine from vanillylamine to pyruvate forming vanillin and L-alanine. Can use pyruvate or oxaloacetate, but not 2-oxoglutarate as amino group acceptors. Is able to convert (S)-1-phenylethylamine into acetophenone in vitro. This Capsicum chinense (Scotch bonnet) protein is Vanillin aminotransferase.